Consider the following 336-residue polypeptide: Phosphoribosylformylglycinamidine cyclo-ligase (336 aa).

Belongs to the AIR synthase family.

The protein resides in the cytoplasm. The catalysed reaction is 2-formamido-N(1)-(5-O-phospho-beta-D-ribosyl)acetamidine + ATP = 5-amino-1-(5-phospho-beta-D-ribosyl)imidazole + ADP + phosphate + H(+). The protein operates within purine metabolism; IMP biosynthesis via de novo pathway; 5-amino-1-(5-phospho-D-ribosyl)imidazole from N(2)-formyl-N(1)-(5-phospho-D-ribosyl)glycinamide: step 2/2. The protein is Phosphoribosylformylglycinamidine cyclo-ligase of Thermoanaerobacter sp. (strain X514).